Here is a 237-residue protein sequence, read N- to C-terminus: (5-formylfuran-3-yl)methyl phosphate synthase (237 aa).

Lys-27 (schiff-base intermediate with substrate) is an active-site residue. The active-site Proton acceptor is Lys-85.

It belongs to the MfnB family.

It catalyses the reaction 2 D-glyceraldehyde 3-phosphate = 4-(hydroxymethyl)-2-furancarboxaldehyde phosphate + phosphate + 2 H2O. It functions in the pathway cofactor biosynthesis; methanofuran biosynthesis. Functionally, catalyzes the formation of 4-(hydroxymethyl)-2-furancarboxaldehyde phosphate (4-HFC-P) from two molecules of glyceraldehyde-3-P (GA-3-P). In Methanobrevibacter smithii (strain ATCC 35061 / DSM 861 / OCM 144 / PS), this protein is (5-formylfuran-3-yl)methyl phosphate synthase.